We begin with the raw amino-acid sequence, 598 residues long: Chaperone protein DnaK (598 aa).

A Phosphothreonine; by autocatalysis modification is found at threonine 180.

The protein belongs to the heat shock protein 70 family.

Its function is as follows. Acts as a chaperone. This is Chaperone protein DnaK from Thermosipho africanus (strain TCF52B).